Here is a 246-residue protein sequence, read N- to C-terminus: MLKSEVSKQITTPLTAPAFPRGPYRFHNREYFNIIYRTDADALRKIVPEPLELGEDPLVRFEMMAMPDTSGLGSYTECGQAIPVSYNGKKGDYLHMMYLDNQPAIAVGRELSAYPKKLGYPKLFVDSDTLVGTLDYGKLRVAIATMGYKHKQLDLNEAKEQICRPNFMLKIIPNYDGTPRICELISAQIKDITVHEAWTGPARLQLFDHAMAPFNDLPVKEIVSSSHILTDLTLPSPEVIYDYLKK.

Lysine 116 serves as the catalytic Schiff-base intermediate with acetoacetate.

This sequence belongs to the ADC family.

The enzyme catalyses acetoacetate + H(+) = acetone + CO2. Its function is as follows. Catalyzes the conversion of acetoacetate to acetone and carbon dioxide. The sequence is that of Acetoacetate decarboxylase from Clostridium botulinum (strain Eklund 17B / Type B).